Reading from the N-terminus, the 952-residue chain is Ubiquitin carboxyl-terminal hydrolase 15 (952 aa).

An N-acetylalanine modification is found at Ala2. The tract at residues 2–223 (AEGGAADLDI…KNEDGTWPRG (222 aa)) is mediates interaction with SART3. The DUSP domain occupies 7–118 (ADLDIQRSDI…GQEPIARKVV (112 aa)). Thr226 carries the post-translational modification Phosphothreonine. The USP domain maps to 260-904 (CGLSNLGNTC…AAYVLFYQRQ (645 aa)). Residue Cys269 is the Nucleophile of the active site. The residue at position 573 (Thr573) is a Phosphothreonine. A disordered region spans residues 598-666 (TEGSLHCCKD…GDNDSENGLC (69 aa)). Residues 627–644 (METDEPDDESSQDQELPS) show a composition bias toward acidic residues. The active-site Proton acceptor is the His862. Residues 923–952 (SAATGIPLESDEDSNDNDNDIENENCMHTN) are disordered. The span at 931–945 (ESDEDSNDNDNDIEN) shows a compositional bias: acidic residues. Phosphoserine occurs at positions 932 and 936.

It belongs to the peptidase C19 family. In terms of assembly, a homodimer structure has been reported; however it is unclear whether the protein form a homodimer in vivo. Identified in a complex with the COP9 signalosome complex (CSN). Interacts with SMAD1, SMAD2 and SMAD3; the interaction is direct. Forms a complex with SMURF2 and SMAD7. Interacts with TGFBR1. Interacts with SART3; the interaction is direct. May interact with RNF20 and RNF40. May interact with PRKN. Interacts with INCA1. Phosphorylated. Phosphorylation protects against ubiquitination and subsequent degradation by the proteasome. Post-translationally, ubiquitinated, leading to degradation by the proteasome.

The protein localises to the cytoplasm. It is found in the nucleus. The protein resides in the mitochondrion. The enzyme catalyses Thiol-dependent hydrolysis of ester, thioester, amide, peptide and isopeptide bonds formed by the C-terminal Gly of ubiquitin (a 76-residue protein attached to proteins as an intracellular targeting signal).. Hydrolase that removes conjugated ubiquitin from target proteins and regulates various pathways such as the TGF-beta receptor signaling, NF-kappa-B and RNF41/NRDP1-PRKN pathways. Acts as a key regulator of TGF-beta receptor signaling pathway, but the precise mechanism is still unclear: according to a report, acts by promoting deubiquitination of monoubiquitinated R-SMADs (SMAD1, SMAD2 and/or SMAD3), thereby alleviating inhibition of R-SMADs and promoting activation of TGF-beta target genes. According to another reports, regulates the TGF-beta receptor signaling pathway by mediating deubiquitination and stabilization of TGFBR1, leading to an enhanced TGF-beta signal. Able to mediate deubiquitination of monoubiquitinated substrates, 'Lys-27'-, 'Lys-48'- and 'Lys-63'-linked polyubiquitin chains. May also regulate gene expression and/or DNA repair through the deubiquitination of histone H2B. Acts as an inhibitor of mitophagy by counteracting the action of parkin (PRKN): hydrolyzes cleavage of 'Lys-48'- and 'Lys-63'-linked polyubiquitin chains attached by parkin on target proteins such as MFN2, thereby reducing parkin's ability to drive mitophagy. Acts as an associated component of COP9 signalosome complex (CSN) and regulates different pathways via this association: regulates NF-kappa-B by mediating deubiquitination of NFKBIA and deubiquitinates substrates bound to VCP. Involved in endosome organization by mediating deubiquitination of SQSTM1: ubiquitinated SQSTM1 forms a molecular bridge that restrains cognate vesicles in the perinuclear region and its deubiquitination releases target vesicles for fast transport into the cell periphery. Acts as a negative regulator of antifungal immunity by mediating 'Lys-27'-linked deubiquitination of CARD9, thereby inactivating CARD9. The protein is Ubiquitin carboxyl-terminal hydrolase 15 (USP15) of Bos taurus (Bovine).